The primary structure comprises 264 residues: Thiazole synthase (264 aa).

Lys106 serves as the catalytic Schiff-base intermediate with DXP. Residues Gly167, 193–194 (AG), and 215–216 (NS) each bind 1-deoxy-D-xylulose 5-phosphate.

This sequence belongs to the ThiG family. Homotetramer. Forms heterodimers with either ThiH or ThiS.

The protein localises to the cytoplasm. It catalyses the reaction [ThiS sulfur-carrier protein]-C-terminal-Gly-aminoethanethioate + 2-iminoacetate + 1-deoxy-D-xylulose 5-phosphate = [ThiS sulfur-carrier protein]-C-terminal Gly-Gly + 2-[(2R,5Z)-2-carboxy-4-methylthiazol-5(2H)-ylidene]ethyl phosphate + 2 H2O + H(+). The protein operates within cofactor biosynthesis; thiamine diphosphate biosynthesis. Its function is as follows. Catalyzes the rearrangement of 1-deoxy-D-xylulose 5-phosphate (DXP) to produce the thiazole phosphate moiety of thiamine. Sulfur is provided by the thiocarboxylate moiety of the carrier protein ThiS. In vitro, sulfur can be provided by H(2)S. This chain is Thiazole synthase, found in Pseudomonas putida (strain W619).